Reading from the N-terminus, the 434-residue chain is Adenylosuccinate synthetase (434 aa).

Residues 11–17 (GDEGKGK) and 39–41 (GHT) each bind GTP. Aspartate 12 acts as the Proton acceptor in catalysis. Residues aspartate 12 and glycine 39 each coordinate Mg(2+). IMP-binding positions include 12-15 (DEGK), 37-40 (NAGH), threonine 134, arginine 148, asparagine 230, threonine 245, and arginine 309. Catalysis depends on histidine 40, which acts as the Proton donor. Substrate is bound at residue 305 to 311 (VTTGRKR). Residues arginine 311, 337–339 (KLD), and 419–421 (GTG) each bind GTP.

The protein belongs to the adenylosuccinate synthetase family. As to quaternary structure, homodimer. It depends on Mg(2+) as a cofactor.

It is found in the cytoplasm. It catalyses the reaction IMP + L-aspartate + GTP = N(6)-(1,2-dicarboxyethyl)-AMP + GDP + phosphate + 2 H(+). It participates in purine metabolism; AMP biosynthesis via de novo pathway; AMP from IMP: step 1/2. In terms of biological role, plays an important role in the de novo pathway and in the salvage pathway of purine nucleotide biosynthesis. Catalyzes the first committed step in the biosynthesis of AMP from IMP. The polypeptide is Adenylosuccinate synthetase (Lachancea thermotolerans (strain ATCC 56472 / CBS 6340 / NRRL Y-8284) (Yeast)).